Reading from the N-terminus, the 300-residue chain is SNAP25 homologous protein SNAP33 (300 aa).

Disordered stretches follow at residues 1 to 76 (MFGL…QSLF) and 176 to 228 (WKPK…PESA). A Phosphoserine modification is found at S29. The segment covering 38–49 (TLNPSKRTTSEP) has biased composition (polar residues). The span at 190 to 208 (TRDDSPTRRVNHLEKREKL) shows a compositional bias: basic and acidic residues. The 63-residue stretch at 235–297 (EMEKAKQDDG…QQSNQRGRRL (63 aa)) folds into the t-SNARE coiled-coil homology domain.

Belongs to the SNAP-25 family. Interacts with the cytokinesis-specific syntaxin KNOLLE and with SYP121. Binds to EXO70B2. Ubiquitous, with a strong expression in root tips, ovules, very young leaves, vascular tissue, hydathodes, stipules and the abscission and dehiscence zones of the siliques.

It is found in the membrane. Functionally, t-SNARE involved in diverse vesicle trafficking and membrane fusion processes, including cell plate formation. May function in the secretory pathway. This Arabidopsis thaliana (Mouse-ear cress) protein is SNAP25 homologous protein SNAP33.